The following is a 66-amino-acid chain: Large ribosomal subunit protein uL29 (66 aa).

This sequence belongs to the universal ribosomal protein uL29 family.

The protein is Large ribosomal subunit protein uL29 of Allorhizobium ampelinum (strain ATCC BAA-846 / DSM 112012 / S4) (Agrobacterium vitis (strain S4)).